The sequence spans 281 residues: Small ribosomal subunit protein uS3 (281 aa).

Residues 38–106 (IRRLLSTGLE…QVQLNILEVK (69 aa)) enclose the KH type-2 domain. The interval 218–281 (APAGAERARR…VTHEPQIAES (64 aa)) is disordered. The span at 238 to 256 (SGAAGTTVTGTDAGRAVGG) shows a compositional bias: low complexity.

Belongs to the universal ribosomal protein uS3 family. In terms of assembly, part of the 30S ribosomal subunit. Forms a tight complex with proteins S10 and S14.

Functionally, binds the lower part of the 30S subunit head. Binds mRNA in the 70S ribosome, positioning it for translation. The protein is Small ribosomal subunit protein uS3 of Mycobacterium leprae (strain Br4923).